The chain runs to 296 residues: MSLKPYATPTYWQRVKVAFQYIFPQLPVTRLAGWLAEQKWGAVTHFIIRTFAKQYKVNLSEAQKSNASDYATFNEFFIRPLKENARPINQDAQALCLPADGKVSESGKIEDDRLLQAKGHFFTLETLLANDQEMANKFKDGHFITTYLSPRDYHRVHMPCDATLRKMIYVPGELFSVNPFLAEHVPNLFARNERVICEFETEFGPMVQILVGATITASMSTVWAGIINPPRTKEVVEYHYETSGETAVHLKKGQEMGAFRLGSTVINLFPKDSVEFEAHLQAGVETRMGERLAKIK.

Catalysis depends on charge relay system; for autoendoproteolytic cleavage activity residues D100, H157, and S263. S263 serves as the catalytic Schiff-base intermediate with substrate; via pyruvic acid; for decarboxylase activity. S263 is modified (pyruvic acid (Ser); by autocatalysis).

Belongs to the phosphatidylserine decarboxylase family. PSD-B subfamily. Prokaryotic type I sub-subfamily. Heterodimer of a large membrane-associated beta subunit and a small pyruvoyl-containing alpha subunit. Requires pyruvate as cofactor. In terms of processing, is synthesized initially as an inactive proenzyme. Formation of the active enzyme involves a self-maturation process in which the active site pyruvoyl group is generated from an internal serine residue via an autocatalytic post-translational modification. Two non-identical subunits are generated from the proenzyme in this reaction, and the pyruvate is formed at the N-terminus of the alpha chain, which is derived from the carboxyl end of the proenzyme. The autoendoproteolytic cleavage occurs by a canonical serine protease mechanism, in which the side chain hydroxyl group of the serine supplies its oxygen atom to form the C-terminus of the beta chain, while the remainder of the serine residue undergoes an oxidative deamination to produce ammonia and the pyruvoyl prosthetic group on the alpha chain. During this reaction, the Ser that is part of the protease active site of the proenzyme becomes the pyruvoyl prosthetic group, which constitutes an essential element of the active site of the mature decarboxylase.

It localises to the cell membrane. It carries out the reaction a 1,2-diacyl-sn-glycero-3-phospho-L-serine + H(+) = a 1,2-diacyl-sn-glycero-3-phosphoethanolamine + CO2. The protein operates within phospholipid metabolism; phosphatidylethanolamine biosynthesis; phosphatidylethanolamine from CDP-diacylglycerol: step 2/2. In terms of biological role, catalyzes the formation of phosphatidylethanolamine (PtdEtn) from phosphatidylserine (PtdSer). The protein is Phosphatidylserine decarboxylase proenzyme of Actinobacillus pleuropneumoniae serotype 7 (strain AP76).